The chain runs to 431 residues: Aspartokinase (431 aa).

The protein belongs to the aspartokinase family.

It carries out the reaction L-aspartate + ATP = 4-phospho-L-aspartate + ADP. Its pathway is amino-acid biosynthesis; L-lysine biosynthesis via DAP pathway; (S)-tetrahydrodipicolinate from L-aspartate: step 1/4. It functions in the pathway amino-acid biosynthesis; L-methionine biosynthesis via de novo pathway; L-homoserine from L-aspartate: step 1/3. The protein operates within amino-acid biosynthesis; L-threonine biosynthesis; L-threonine from L-aspartate: step 1/5. The sequence is that of Aspartokinase (lysC) from Chlamydia trachomatis serovar D (strain ATCC VR-885 / DSM 19411 / UW-3/Cx).